Here is a 1378-residue protein sequence, read N- to C-terminus: Carboxypeptidase D (1378 aa).

A signal peptide spans 1 to 37 (MASGWDERPPWRLESLRLLPPPPLLLLLLLLRSSAQA). At 38–1297 (AHIKKAEATT…DNRIFGLPRE (1260 aa)) the chain is on the extracellular side. The Peptidase M14 1 domain occupies 62 to 380 (HYYHEAALGE…ESLITLIEKV (319 aa)). 2 residues coordinate Zn(2+): histidine 139 and glutamate 142. The short motif at 162 to 164 (RGD) is the Cell attachment site element. Residues asparagine 172 and asparagine 217 are each glycosylated (N-linked (GlcNAc...) asparagine). Residues 189 to 232 (RAREGDCGLGDSGPPGTSGRDNSRGRDLNRSFPDQFSTGEPPSL) form a disordered region. Residue histidine 257 coordinates Zn(2+). Tyrosine 265 carries the post-translational modification Phosphotyrosine. Serine 270 is subject to Phosphoserine. Glutamate 350 acts as the Proton donor/acceptor in catalysis. N-linked (GlcNAc...) asparagine glycosylation is found at asparagine 399, asparagine 410, asparagine 429, and asparagine 522. The region spanning 502 to 792 (HHHHFPDMEI…RSLIQFMKQV (291 aa)) is the Peptidase M14 2 domain. The Zn(2+) site is built by histidine 564 and glutamate 567. Asparagine 626 is a glycosylation site (N-linked (GlcNAc...) asparagine). Residue histidine 671 coordinates Zn(2+). Catalysis depends on glutamate 762, which acts as the Proton donor/acceptor. Residues asparagine 811, asparagine 855, asparagine 867, asparagine 879, asparagine 953, and asparagine 976 are each glycosylated (N-linked (GlcNAc...) asparagine). Residues 875-898 (TDANNESKKGKGHSTSTDDTSDPT) form a disordered region. Residues 930 to 1209 (RYHSYKDLSE…KSLLSMLVEV (280 aa)) form the Peptidase M14 3 domain. The span at 1039 to 1048 (RERAQEKDCT) shows a compositional bias: basic and acidic residues. The segment at 1039–1068 (RERAQEKDCTSKTGHTNARGRDLDTDFTSN) is disordered. N-linked (GlcNAc...) asparagine glycans are attached at residues asparagine 1068 and asparagine 1140. A helical membrane pass occupies residues 1298 to 1318 (LVVTVSGATMSALILTACIIW). 3 S-palmitoyl cysteine lipidation sites follow: cysteine 1315, cysteine 1319, and cysteine 1321. The Cytoplasmic segment spans residues 1319–1378 (CICSIKSNRHKDGFHRLRQHHDEYEDEIRMMSTGSKKSLLSHEFQDETDTEEETLYSSKH). Phosphoserine occurs at positions 1356 and 1359. Residues 1357 to 1378 (LLSHEFQDETDTEEETLYSSKH) are disordered. Phosphothreonine occurs at positions 1366 and 1368.

This sequence belongs to the peptidase M14 family. The cofactor is Zn(2+). Isoform 1 is widely expressed with highest levels in the hippocampus, spinal cord, atrium, colon, testis and ovaries. Detected in the liver of females but not males. Isoform 2 is not detected in brain or lung.

Its subcellular location is the cell membrane. The protein resides in the nucleus. It catalyses the reaction Releases C-terminal Arg and Lys from polypeptides.. The chain is Carboxypeptidase D from Rattus norvegicus (Rat).